The sequence spans 762 residues: Polyribonucleotide nucleotidyltransferase (762 aa).

Mg(2+) is bound by residues Asp-531 and Asp-537. Residues 597–656 (PRVTTIKVPVDKIGEVIGPKGKVINSITEETRAQISIEDDGTVFVGATDGPSAQAAIDKI) form the KH domain. The S1 motif domain maps to 668-737 (GERFLGTVVK…KRGKISLVLV (70 aa)).

It belongs to the polyribonucleotide nucleotidyltransferase family. Mg(2+) serves as cofactor.

The protein resides in the cytoplasm. It catalyses the reaction RNA(n+1) + phosphate = RNA(n) + a ribonucleoside 5'-diphosphate. Its function is as follows. Involved in mRNA degradation. Catalyzes the phosphorolysis of single-stranded polyribonucleotides processively in the 3'- to 5'-direction. This is Polyribonucleotide nucleotidyltransferase from Mycobacterium ulcerans (strain Agy99).